The following is a 513-amino-acid chain: Nitrogenase molybdenum-iron protein beta chain (513 aa).

The [8Fe-7S] cluster site is built by Cys70, Cys95, and Cys153.

Belongs to the NifD/NifK/NifE/NifN family. In terms of assembly, tetramer of two alpha and two beta chains. Forms complex with the iron protein (nitrogenase component 2). [8Fe-7S] cluster serves as cofactor.

The enzyme catalyses N2 + 8 reduced [2Fe-2S]-[ferredoxin] + 16 ATP + 16 H2O = H2 + 8 oxidized [2Fe-2S]-[ferredoxin] + 2 NH4(+) + 16 ADP + 16 phosphate + 6 H(+). In terms of biological role, this molybdenum-iron protein is part of the nitrogenase complex that catalyzes the key enzymatic reactions in nitrogen fixation. The chain is Nitrogenase molybdenum-iron protein beta chain (nifK1) from Sinorhizobium fredii (strain NBRC 101917 / NGR234).